Reading from the N-terminus, the 174-residue chain is Rubredoxin-2 (174 aa).

The region spanning M1–I53 is the Rubredoxin-like 1 domain. Residues C6, C9, C39, and C42 each coordinate Fe cation. The span at G56–A65 shows a compositional bias: low complexity. The disordered stretch occupies residues G56–T115. Positions A97 to K109 are enriched in basic residues. The Rubredoxin-like 2 domain maps to F121 to H172. Fe cation is bound by residues C126, C129, C159, and C162.

Belongs to the rubredoxin family. Fe(3+) is required as a cofactor.

The protein localises to the cytoplasm. The protein operates within hydrocarbon metabolism; alkane degradation. Involved in the hydrocarbon hydroxylating system, which transfers electrons from NADH to rubredoxin reductase and then through rubredoxin to alkane 1 monooxygenase. In Alcanivorax borkumensis (strain ATCC 700651 / DSM 11573 / NCIMB 13689 / SK2), this protein is Rubredoxin-2 (alkG).